The chain runs to 299 residues: Taste receptor type 2 member 5 (299 aa).

Position 1 (Met-1) is a topological domain, extracellular. Residues 2–22 traverse the membrane as a helical segment; sequence LSAGLGLLMLVAVVEFLIGLI. Residues 23–45 lie on the Cytoplasmic side of the membrane; that stretch reads GNGVLVVWSFREWMRKFNWSSYN. A helical transmembrane segment spans residues 46–66; that stretch reads LIILGLAGCRFLLQWLIILDL. The Extracellular portion of the chain corresponds to 67–82; sequence SLFPLFQSSRWLRYLS. A helical membrane pass occupies residues 83–103; that stretch reads IFWVLVSQASLWFATFLSVFY. Over 104 to 127 the chain is Cytoplasmic; sequence CKKITTFDRPAYLWLKQRAYNLSL. The chain crosses the membrane as a helical span at residues 128-148; that stretch reads WCLLGYFIINLLLTVQIGLMF. Residues 149-175 lie on the Extracellular side of the membrane; that stretch reads YHPPQGNSSIRYPFESWQYLYAFRLNS. Asn-155 carries N-linked (GlcNAc...) asparagine glycosylation. A helical transmembrane segment spans residues 176 to 196; the sequence is GSYLPLMVFLVSSGMLIVSLY. The Cytoplasmic segment spans residues 197–223; the sequence is THHKKMKVHSAGRRDVRAKAHITALKS. The chain crosses the membrane as a helical span at residues 224 to 244; that stretch reads LGCFLFLHLVYIMASPFSITS. The Extracellular portion of the chain corresponds to 245-253; it reads KTYPPDLTS. Residues 254–274 traverse the membrane as a helical segment; sequence VFIWETLMAAYPSLHSLILIM. The Cytoplasmic segment spans residues 275–299; that stretch reads GIPRVKQTCQKILWKTVCARRCWGP.

This sequence belongs to the G-protein coupled receptor T2R family.

Its subcellular location is the membrane. Receptor that may play a role in the perception of bitterness and is gustducin-linked. May play a role in sensing the chemical composition of the gastrointestinal content. The activity of this receptor may stimulate alpha gustducin, mediate PLC-beta-2 activation and lead to the gating of TRPM5. The sequence is that of Taste receptor type 2 member 5 (TAS2R5) from Gorilla gorilla gorilla (Western lowland gorilla).